A 226-amino-acid polypeptide reads, in one-letter code: uncharacterized protein (226 aa).

This is an uncharacterized protein from Mycobacterium bovis (strain ATCC BAA-935 / AF2122/97).